Consider the following 687-residue polypeptide: Polyphosphate kinase (687 aa).

An ATP-binding site is contributed by Asn45. Residues Arg375 and Arg405 each contribute to the Mg(2+) site. The active-site Phosphohistidine intermediate is His435. ATP contacts are provided by Tyr472, Arg568, and His596.

This sequence belongs to the polyphosphate kinase 1 (PPK1) family. Mg(2+) is required as a cofactor. Post-translationally, an intermediate of this reaction is the autophosphorylated ppk in which a phosphate is covalently linked to a histidine residue through a N-P bond.

The enzyme catalyses [phosphate](n) + ATP = [phosphate](n+1) + ADP. Functionally, catalyzes the reversible transfer of the terminal phosphate of ATP to form a long-chain polyphosphate (polyP). The sequence is that of Polyphosphate kinase from Paraburkholderia phytofirmans (strain DSM 17436 / LMG 22146 / PsJN) (Burkholderia phytofirmans).